Reading from the N-terminus, the 332-residue chain is Ketol-acid reductoisomerase (NADP(+)) 2 (332 aa).

Residues 2–182 (AELFYDADAD…GGTRAGVIRT (181 aa)) form the KARI N-terminal Rossmann domain. NADP(+) contacts are provided by residues 25 to 28 (YGSQ), Ser51, Ser53, and 83 to 86 (DPIQ). The active site involves His108. Gly134 contacts NADP(+). Residues 183–328 (TFTEETETDL…KELRKLMSWV (146 aa)) enclose the KARI C-terminal knotted domain. Mg(2+) is bound by residues Asp191, Glu195, Glu227, and Glu231. Residue Ser252 participates in substrate binding.

The protein belongs to the ketol-acid reductoisomerase family. It depends on Mg(2+) as a cofactor.

The enzyme catalyses (2R)-2,3-dihydroxy-3-methylbutanoate + NADP(+) = (2S)-2-acetolactate + NADPH + H(+). It catalyses the reaction (2R,3R)-2,3-dihydroxy-3-methylpentanoate + NADP(+) = (S)-2-ethyl-2-hydroxy-3-oxobutanoate + NADPH + H(+). It participates in amino-acid biosynthesis; L-isoleucine biosynthesis; L-isoleucine from 2-oxobutanoate: step 2/4. The protein operates within amino-acid biosynthesis; L-valine biosynthesis; L-valine from pyruvate: step 2/4. In terms of biological role, involved in the biosynthesis of branched-chain amino acids (BCAA). Catalyzes an alkyl-migration followed by a ketol-acid reduction of (S)-2-acetolactate (S2AL) to yield (R)-2,3-dihydroxy-isovalerate. In the isomerase reaction, S2AL is rearranged via a Mg-dependent methyl migration to produce 3-hydroxy-3-methyl-2-ketobutyrate (HMKB). In the reductase reaction, this 2-ketoacid undergoes a metal-dependent reduction by NADPH to yield (R)-2,3-dihydroxy-isovalerate. The polypeptide is Ketol-acid reductoisomerase (NADP(+)) 2 (Streptomyces coelicolor (strain ATCC BAA-471 / A3(2) / M145)).